The chain runs to 129 residues: uncharacterized protein (129 aa).

It to M.pneumoniae MPN_376 N-terminal region.

This is an uncharacterized protein from Mycoplasma pneumoniae (strain ATCC 29342 / M129 / Subtype 1) (Mycoplasmoides pneumoniae).